The primary structure comprises 507 residues: ATP synthase subunit alpha, chloroplastic (507 aa).

Residue 170-177 participates in ATP binding; that stretch reads GDRQTGKT.

Belongs to the ATPase alpha/beta chains family. F-type ATPases have 2 components, CF(1) - the catalytic core - and CF(0) - the membrane proton channel. CF(1) has five subunits: alpha(3), beta(3), gamma(1), delta(1), epsilon(1). CF(0) has four main subunits: a, b, b' and c.

Its subcellular location is the plastid. It is found in the chloroplast thylakoid membrane. The enzyme catalyses ATP + H2O + 4 H(+)(in) = ADP + phosphate + 5 H(+)(out). Produces ATP from ADP in the presence of a proton gradient across the membrane. The alpha chain is a regulatory subunit. In Tetradesmus obliquus (Green alga), this protein is ATP synthase subunit alpha, chloroplastic.